We begin with the raw amino-acid sequence, 159 residues long: Phosphopantetheine adenylyltransferase (159 aa).

T10 contributes to the substrate binding site. ATP-binding positions include T10–F11 and H18. Residues K42, L74, and R88 each coordinate substrate. Residues G89–R91, E99, and W124–T130 each bind ATP.

It belongs to the bacterial CoaD family. In terms of assembly, homohexamer. It depends on Mg(2+) as a cofactor.

The protein resides in the cytoplasm. The catalysed reaction is (R)-4'-phosphopantetheine + ATP + H(+) = 3'-dephospho-CoA + diphosphate. The protein operates within cofactor biosynthesis; coenzyme A biosynthesis; CoA from (R)-pantothenate: step 4/5. Functionally, reversibly transfers an adenylyl group from ATP to 4'-phosphopantetheine, yielding dephospho-CoA (dPCoA) and pyrophosphate. In Mannheimia succiniciproducens (strain KCTC 0769BP / MBEL55E), this protein is Phosphopantetheine adenylyltransferase.